Reading from the N-terminus, the 263-residue chain is Sepiapterin reductase (263 aa).

Residues 18–24 (GASRGFG), 46–47 (RT), and 73–74 (DL) contribute to the NADP(+) site. Substrate contacts are provided by residues 160–161 (SL) and Tyr-173. Residue Lys-177 coordinates NADP(+). Gly-202 contributes to the substrate binding site. 204 to 209 (LDTDMH) contacts NADP(+). Substrate is bound at residue Asp-260.

It belongs to the sepiapterin reductase family. In terms of assembly, homodimer.

The protein localises to the cytoplasm. It carries out the reaction L-erythro-7,8-dihydrobiopterin + NADP(+) = L-sepiapterin + NADPH + H(+). The catalysed reaction is (6R)-L-erythro-5,6,7,8-tetrahydrobiopterin + 2 NADP(+) = 6-pyruvoyl-5,6,7,8-tetrahydropterin + 2 NADPH + 2 H(+). Functionally, catalyzes the final one or two reductions in tetra-hydrobiopterin biosynthesis to form 5,6,7,8-tetrahydrobiopterin. The chain is Sepiapterin reductase (spr) from Xenopus laevis (African clawed frog).